The primary structure comprises 142 residues: Large ribosomal subunit protein bL17 (142 aa).

This sequence belongs to the bacterial ribosomal protein bL17 family. Part of the 50S ribosomal subunit. Contacts protein L32.

This is Large ribosomal subunit protein bL17 from Chlamydia caviae (strain ATCC VR-813 / DSM 19441 / 03DC25 / GPIC) (Chlamydophila caviae).